Reading from the N-terminus, the 235-residue chain is Large ribosomal subunit protein uL1 (235 aa).

The protein belongs to the universal ribosomal protein uL1 family. As to quaternary structure, part of the 50S ribosomal subunit.

Functionally, binds directly to 23S rRNA. The L1 stalk is quite mobile in the ribosome, and is involved in E site tRNA release. Its function is as follows. Protein L1 is also a translational repressor protein, it controls the translation of the L11 operon by binding to its mRNA. In Mycobacterium tuberculosis (strain ATCC 25177 / H37Ra), this protein is Large ribosomal subunit protein uL1.